Here is a 45-residue protein sequence, read N- to C-terminus: Major cold shock protein (45 aa).

A CSD domain is found at 1-45 (EKGFGFISTENGQDVFAHFSAIQTNGFKTLEEGQKVEFDVEEGQR).

Homodimer.

The protein localises to the cytoplasm. The polypeptide is Major cold shock protein (cspA) (Streptococcus dysgalactiae).